The sequence spans 378 residues: 1-acyl-sn-glycerol-3-phosphate acyltransferase delta (378 aa).

The chain crosses the membrane as a helical span at residues 11 to 31; it reads FLCHLIFCYVFIVSGLIINTI. The HXXXXD motif motif lies at 96 to 101; that stretch reads HKFEID. A run of 3 helical transmembrane segments spans residues 125 to 145, 307 to 327, and 338 to 358; these read ELAYVPIIGWMWYFTEMVFCT, TLVNWLFWASMLLYPFFRFVI, and LASFVLVFFVASMGVRWMIGV.

The protein belongs to the 1-acyl-sn-glycerol-3-phosphate acyltransferase family.

The protein localises to the endoplasmic reticulum membrane. The catalysed reaction is a 1-acyl-sn-glycero-3-phosphate + an acyl-CoA = a 1,2-diacyl-sn-glycero-3-phosphate + CoA. It catalyses the reaction (4Z,7Z,10Z,13Z,16Z,19Z)-docosahexaenoyl-CoA + 1-hexadecanoyl-sn-glycero-3-phosphate = 1-hexadecanoyl-2-(4Z,7Z,10Z,13Z,16Z,19Z-docosahexaenoyl)-sn-glycero-3-phosphate + CoA. It carries out the reaction 1-octadecanoyl-sn-glycero-3-phosphate + (9Z,12Z)-octadecadienoyl-CoA = 1-octadecanoyl-2-(9Z,12Z-octadecadienoyl)-sn-glycero-3-phosphate + CoA. The enzyme catalyses 1-octadecanoyl-sn-glycero-3-phosphate + (4Z,7Z,10Z,13Z,16Z,19Z)-docosahexaenoyl-CoA = 1-octadecanoyl-2-(4Z,7Z,10Z,13Z,16Z,19Z-docosahexaenoyl)-sn-glycero-3-phosphate + CoA. The catalysed reaction is (4Z,7Z,10Z,13Z,16Z,19Z)-docosahexaenoyl-CoA + 1-(9Z-octadecenoyl)-sn-glycero-3-phosphate = 1-(9Z-octadecenoyl)-2-(4Z,7Z,10Z,13Z,16Z,19Z-docosahexaenoyl)-sn-glycero-3-phosphate + CoA. It functions in the pathway phospholipid metabolism; CDP-diacylglycerol biosynthesis; CDP-diacylglycerol from sn-glycerol 3-phosphate: step 2/3. Its function is as follows. Converts 1-acyl-sn-glycerol-3-phosphate (lysophosphatidic acid or LPA) into 1,2-diacyl-sn-glycerol-3-phosphate (phosphatidic acid or PA) by incorporating an acyl moiety at the sn-2 position of the glycerol backbone. Exhibits high acyl-CoA specificity for polyunsaturated fatty acyl-CoA, especially docosahexaenoyl-CoA (22:6-CoA, DHA-CoA). The sequence is that of 1-acyl-sn-glycerol-3-phosphate acyltransferase delta (AGPAT4) from Bos taurus (Bovine).